The chain runs to 213 residues: MDTIWDISPPIAPATPVWPGDTPVGIERVWRIEAGSPVNVARITLSPHTGAHADAPLHYDAHGAPIGAVPLDAYLGRCRVIHCIGAHPVVSPDDVRAALADAPPRVLLRTYGQAPQRAWDSAFCAVAPQTIDLLAAHGVRLVGIDTPSLDPQESKTMDAHRRIRAHGMAILEGLVLDEIAAGDYELIALPLKFATLDASPVRAVLRALPDAPR.

A substrate-binding site is contributed by Trp-18. Zn(2+)-binding residues include His-48, His-52, and Asp-54. The active-site Proton donor/acceptor is His-58. Positions 160 and 172 each coordinate Zn(2+).

This sequence belongs to the Cyclase 1 superfamily. KynB family. In terms of assembly, homodimer. Zn(2+) is required as a cofactor.

The catalysed reaction is N-formyl-L-kynurenine + H2O = L-kynurenine + formate + H(+). The protein operates within amino-acid degradation; L-tryptophan degradation via kynurenine pathway; L-kynurenine from L-tryptophan: step 2/2. Its function is as follows. Catalyzes the hydrolysis of N-formyl-L-kynurenine to L-kynurenine, the second step in the kynurenine pathway of tryptophan degradation. The chain is Kynurenine formamidase from Burkholderia thailandensis (strain ATCC 700388 / DSM 13276 / CCUG 48851 / CIP 106301 / E264).